The sequence spans 229 residues: Large ribosomal subunit protein uL1 (229 aa).

In terms of assembly, part of the 50S ribosomal subunit.

In terms of biological role, directly binds to 23S rRNA. Forms what is known as the L1 stalk, which protrudes beyond the 70S ribosome surface. The stalk is preferentially stabilized in 70S versus 50S crystals. Interacts with the E site tRNA, blocking the exit path. This blockage implies that this section of the ribosome must be able to move to release the deacetylated tRNA. Its function is as follows. Protein L1 is also a translational repressor protein, it controls the translation of the L11 operon by binding to its mRNA. The protein is Large ribosomal subunit protein uL1 (rplA) of Thermus thermophilus (strain ATCC 27634 / DSM 579 / HB8).